A 508-amino-acid polypeptide reads, in one-letter code: Photosystem II CP47 reaction center protein (508 aa).

A run of 6 helical transmembrane segments spans residues 21 to 36 (SVHI…WAGS), 101 to 115 (IVFS…IWHW), 140 to 156 (GIHL…FGAF), 203 to 218 (IAAG…FHLS), 237 to 252 (VLSS…AFVV), and 457 to 472 (TFAL…HGAR).

Belongs to the PsbB/PsbC family. PsbB subfamily. As to quaternary structure, PSII is composed of 1 copy each of membrane proteins PsbA, PsbB, PsbC, PsbD, PsbE, PsbF, PsbH, PsbI, PsbJ, PsbK, PsbL, PsbM, PsbT, PsbX, PsbY, PsbZ, Psb30/Ycf12, at least 3 peripheral proteins of the oxygen-evolving complex and a large number of cofactors. It forms dimeric complexes. The cofactor is Binds multiple chlorophylls. PSII binds additional chlorophylls, carotenoids and specific lipids..

The protein localises to the plastid. It is found in the chloroplast thylakoid membrane. In terms of biological role, one of the components of the core complex of photosystem II (PSII). It binds chlorophyll and helps catalyze the primary light-induced photochemical processes of PSII. PSII is a light-driven water:plastoquinone oxidoreductase, using light energy to abstract electrons from H(2)O, generating O(2) and a proton gradient subsequently used for ATP formation. This chain is Photosystem II CP47 reaction center protein, found in Zea mays (Maize).